We begin with the raw amino-acid sequence, 461 residues long: Ribosomal protein uS12 methylthiotransferase RimO (461 aa).

The region spanning proline 13 to proline 128 is the MTTase N-terminal domain. Cysteine 22, cysteine 58, cysteine 87, cysteine 159, cysteine 163, and cysteine 166 together coordinate [4Fe-4S] cluster. A Radical SAM core domain is found at leucine 145–lysine 390. The TRAM domain occupies alanine 393–valine 461.

This sequence belongs to the methylthiotransferase family. RimO subfamily. The cofactor is [4Fe-4S] cluster.

It is found in the cytoplasm. It carries out the reaction L-aspartate(89)-[ribosomal protein uS12]-hydrogen + (sulfur carrier)-SH + AH2 + 2 S-adenosyl-L-methionine = 3-methylsulfanyl-L-aspartate(89)-[ribosomal protein uS12]-hydrogen + (sulfur carrier)-H + 5'-deoxyadenosine + L-methionine + A + S-adenosyl-L-homocysteine + 2 H(+). Catalyzes the methylthiolation of an aspartic acid residue of ribosomal protein uS12. This Paraburkholderia phytofirmans (strain DSM 17436 / LMG 22146 / PsJN) (Burkholderia phytofirmans) protein is Ribosomal protein uS12 methylthiotransferase RimO.